The following is a 445-amino-acid chain: MDIRQVRETIEMIEEQNFDIRTITMGISLLDCIDSDIDKAAEKVYTKIVTKAKNLVAVGDEIAAELGIPIVNKRVSVTPIALIGAATDATDYLPLAHALDKAAHEIGIDFIGGFSALAQKGYQKGDEILINSIPQALAQTSKVCSSVNIGSTKTGINMTAVRDMGRIIKETAEASDMGAAKLVVFANAVEDNPFMAGAFHGVGEADVVINVGVSGPGVVKRALEKVRGESFDVVAETVKKTAFKITRIGQLVGNMASERLGVKFGIVDLSLAPTPAVGDSVARVLEEMGLETVGTHGTTAALALLNDAVKKGGVMACNQVGGLSGAFIPVSEDEGMIAAVQNGSLNLEKLEAMTAICSVGLDMIAIPETTPAETIAAMIADEAAIGVINQKTTAVRIIPLGKEGDMIEFGGLLGTAPVMKVNQASSVDFINRGGQIPAPIHSFKN.

This sequence belongs to the UPF0210 family. As to quaternary structure, homodimer.

This is UPF0210 protein SSU05_0296 from Streptococcus suis (strain 05ZYH33).